The sequence spans 660 residues: Cysteine-rich receptor-like protein kinase 22 (660 aa).

An N-terminal signal peptide occupies residues 1–24; sequence MKQRSFLSILCFILLAFGVASVSA. Gnk2-homologous domains are found at residues 25-128 and 137-250; these read QTCI…NISF and IEPQ…LFTF. Residues 25–294 are Extracellular-facing; sequence QTCIENRKYF…DSRGVSAGIV (270 aa). 7 N-linked (GlcNAc...) asparagine glycosylation sites follow: N37, N53, N105, N125, N191, N230, and N256. The span at 264 to 273 shows a compositional bias: pro residues; the sequence is KPPMNVPRPP. A disordered region spans residues 264 to 283; sequence KPPMNVPRPPSVGHGANTTD. N-linked (GlcNAc...) asparagine glycosylation is found at N280 and N284. The helical transmembrane segment at 295-315 threads the bilayer; sequence VVITVPAVVIVLILVVLGFFI. Residues 316-660 lie on the Cytoplasmic side of the membrane; the sequence is CWRRKSLQRT…DPLSEGLESG (345 aa). The 280-residue stretch at 353–632 folds into the Protein kinase domain; the sequence is FSKSNKLGEG…IVSMLTSNTI (280 aa). Residues 359-367 and K381 contribute to the ATP site; that span reads LGEGRFGEV. At Y426 the chain carries Phosphotyrosine. The Proton acceptor role is filled by D478. Residue S482 is modified to Phosphoserine. T518 carries the phosphothreonine modification. A Phosphotyrosine modification is found at Y526.

Belongs to the protein kinase superfamily. Ser/Thr protein kinase family. CRK subfamily.

Its subcellular location is the membrane. It carries out the reaction L-seryl-[protein] + ATP = O-phospho-L-seryl-[protein] + ADP + H(+). The catalysed reaction is L-threonyl-[protein] + ATP = O-phospho-L-threonyl-[protein] + ADP + H(+). This Arabidopsis thaliana (Mouse-ear cress) protein is Cysteine-rich receptor-like protein kinase 22 (CRK22).